Consider the following 339-residue polypeptide: Transaldolase (339 aa).

Lysine 135 functions as the Schiff-base intermediate with substrate in the catalytic mechanism.

The protein belongs to the transaldolase family. Type 1 subfamily. In terms of assembly, homodimer.

The protein localises to the cytoplasm. The catalysed reaction is D-sedoheptulose 7-phosphate + D-glyceraldehyde 3-phosphate = D-erythrose 4-phosphate + beta-D-fructose 6-phosphate. Its pathway is carbohydrate degradation; pentose phosphate pathway; D-glyceraldehyde 3-phosphate and beta-D-fructose 6-phosphate from D-ribose 5-phosphate and D-xylulose 5-phosphate (non-oxidative stage): step 2/3. In terms of biological role, transaldolase is important for the balance of metabolites in the pentose-phosphate pathway. This chain is Transaldolase, found in Prochlorococcus marinus (strain MIT 9211).